A 465-amino-acid chain; its full sequence is Methylenetetrahydrofolate--tRNA-(uracil-5-)-methyltransferase TrmFO (465 aa).

3 to 8 (GAGLAG) provides a ligand contact to FAD.

This sequence belongs to the MnmG family. TrmFO subfamily. It depends on FAD as a cofactor.

It is found in the cytoplasm. The catalysed reaction is uridine(54) in tRNA + (6R)-5,10-methylene-5,6,7,8-tetrahydrofolate + NADH + H(+) = 5-methyluridine(54) in tRNA + (6S)-5,6,7,8-tetrahydrofolate + NAD(+). It catalyses the reaction uridine(54) in tRNA + (6R)-5,10-methylene-5,6,7,8-tetrahydrofolate + NADPH + H(+) = 5-methyluridine(54) in tRNA + (6S)-5,6,7,8-tetrahydrofolate + NADP(+). In terms of biological role, catalyzes the folate-dependent formation of 5-methyl-uridine at position 54 (M-5-U54) in all tRNAs. This chain is Methylenetetrahydrofolate--tRNA-(uracil-5-)-methyltransferase TrmFO, found in Bradyrhizobium sp. (strain ORS 278).